Reading from the N-terminus, the 792-residue chain is Molybdenum cofactor sulfurase (792 aa).

The residue at position 246 (K246) is an N6-(pyridoxal phosphate)lysine. C414 is a catalytic residue. One can recognise an MOSC domain in the interval 646–792 (LRLLRQSSQR…LTCGDVVVVT (147 aa)). S748 carries the post-translational modification Phosphoserine.

This sequence belongs to the class-V pyridoxal-phosphate-dependent aminotransferase family. MOCOS subfamily. It depends on pyridoxal 5'-phosphate as a cofactor.

It catalyses the reaction Mo-molybdopterin + L-cysteine + AH2 = thio-Mo-molybdopterin + L-alanine + A + H2O. Its pathway is cofactor biosynthesis; molybdopterin biosynthesis. Sulfurates the molybdenum cofactor. Sulfation of molybdenum is essential for xanthine dehydrogenase (XDH) and aldehyde oxidase (ADO) enzymes in which molybdenum cofactor is liganded by 1 oxygen and 1 sulfur atom in active form. The chain is Molybdenum cofactor sulfurase from Drosophila pseudoobscura pseudoobscura (Fruit fly).